A 65-amino-acid polypeptide reads, in one-letter code: Large ribosomal subunit protein bL28 (65 aa).

Residues 1-26 (MARRDDLTNKGPMSGNKRSHALNATK) are disordered. Positions 17 to 26 (KRSHALNATK) are enriched in basic residues.

It belongs to the bacterial ribosomal protein bL28 family.

In Mycoplasma mobile (strain ATCC 43663 / 163K / NCTC 11711) (Mesomycoplasma mobile), this protein is Large ribosomal subunit protein bL28.